The chain runs to 539 residues: T-complex protein 1 subunit delta (539 aa).

A disordered region spans residues 1 to 28; the sequence is MPENVASRSGPPAAGPGNRGKGAYQDRD. The residue at position 19 (arginine 19) is an Omega-N-methylarginine. The residue at position 21 (lysine 21) is an N6-acetyllysine. At serine 36 the chain carries Phosphoserine. Residue glycine 53 participates in ADP binding. Glycine 53 contributes to the ATP binding site. Mg(2+) is bound at residue aspartate 104. Residues glycine 105, threonine 106, threonine 107, serine 108, asparagine 172, serine 173, and lysine 174 each coordinate ADP. 2 residues coordinate ATP: glycine 105 and threonine 106. Lysine 174 is an ATP binding site. Phosphoserine occurs at positions 184 and 202. 4 positions are modified to N6-acetyllysine: lysine 288, lysine 302, lysine 319, and lysine 326. Glycine 425 is a binding site for ADP. Phosphoserine is present on serine 444. Residue glutamine 510 participates in ADP binding.

It belongs to the TCP-1 chaperonin family. In terms of assembly, component of the chaperonin-containing T-complex (TRiC), a hexadecamer composed of two identical back-to-back stacked rings enclosing a protein folding chamber. Each ring is made up of eight different subunits: TCP1/CCT1, CCT2, CCT3, CCT4, CCT5, CCT6A/CCT6, CCT7, CCT8. Interacts with PACRG. Interacts with DNAAF4. Interacts with DLEC1.

The protein localises to the cytoplasm. The protein resides in the melanosome. Its subcellular location is the cytoskeleton. It localises to the microtubule organizing center. It is found in the centrosome. The protein localises to the cilium basal body. The catalysed reaction is ATP + H2O = ADP + phosphate + H(+). Functionally, component of the chaperonin-containing T-complex (TRiC), a molecular chaperone complex that assists the folding of actin, tubulin and other proteins upon ATP hydrolysis. The TRiC complex mediates the folding of WRAP53/TCAB1, thereby regulating telomere maintenance. As part of the TRiC complex may play a role in the assembly of BBSome, a complex involved in ciliogenesis regulating transports vesicles to the cilia. The chain is T-complex protein 1 subunit delta (Cct4) from Rattus norvegicus (Rat).